The chain runs to 152 residues: Aspartate carbamoyltransferase regulatory chain (152 aa).

Zn(2+) contacts are provided by cysteine 109, cysteine 114, cysteine 138, and cysteine 141.

This sequence belongs to the PyrI family. Contains catalytic and regulatory chains. Zn(2+) serves as cofactor.

Involved in allosteric regulation of aspartate carbamoyltransferase. The sequence is that of Aspartate carbamoyltransferase regulatory chain from Thermoplasma volcanium (strain ATCC 51530 / DSM 4299 / JCM 9571 / NBRC 15438 / GSS1).